The primary structure comprises 266 residues: Vitamin B12-binding protein (266 aa).

A signal peptide spans 1-22 (MVKQMFRALVALLLTLPVWLYA). The Fe/B12 periplasmic-binding domain occupies 25 to 266 (RVITLSPANT…QLCNALSQVN (242 aa)). Residues Tyr-50 and 242–246 (DWFER) contribute to the cyanocob(III)alamin site. An intrachain disulfide couples Cys-183 to Cys-259.

This sequence belongs to the BtuF family. The complex is composed of two ATP-binding proteins (BtuD), two transmembrane proteins (BtuC) and a solute-binding protein (BtuF).

Its subcellular location is the periplasm. Its function is as follows. Part of the ABC transporter complex BtuCDF involved in vitamin B12 import. Binds vitamin B12 and delivers it to the periplasmic surface of BtuC. This is Vitamin B12-binding protein from Salmonella choleraesuis (strain SC-B67).